A 358-amino-acid polypeptide reads, in one-letter code: Serine/threonine-protein phosphatase 2A activator (358 aa).

Residues 1 to 20 form a disordered region; the sequence is MAEGERQPPPDSSEEAPPAT. An N-acetylalanine modification is found at alanine 2. The ATP site is built by arginine 183, threonine 188, and glycine 189. Glycine 243 and aspartate 249 together coordinate Mg(2+). Residues proline 339, glutamine 342, and histidine 343 each contribute to the ATP site.

Belongs to the PTPA-type PPIase family. As to quaternary structure, associates with PP2A heterodimeric core enzyme PP2A(D), composed of a 36 kDa catalytic subunit (subunit C) and a 65 kDa constant regulatory subunit (PR65 or subunit A). Interacts with the catalytic subunit PPP2CA (via C-terminus). Interacts with PPP2CB. As to expression, widely expressed.

The protein resides in the cytoplasm. Its subcellular location is the nucleus. It carries out the reaction [protein]-peptidylproline (omega=180) = [protein]-peptidylproline (omega=0). In terms of biological role, PPIases accelerate the folding of proteins. It catalyzes the cis-trans isomerization of proline imidic peptide bonds in oligopeptides. Acts as a regulatory subunit for serine/threonine-protein phosphatase 2A (PP2A). Modulates PP2A activity or substrate specificity, probably by inducing a conformational change in the catalytic subunit, a proposed direct target of the PPIase. Can reactivate inactive phosphatase PP2A-phosphatase methylesterase complexes (PP2A(i)) in presence of ATP and Mg(2+). Reversibly stimulates the variable phosphotyrosyl phosphatase activity of PP2A core heterodimer PP2A(D) in presence of ATP and Mg(2+) (in vitro). The phosphotyrosyl phosphatase activity is dependent of an ATPase activity of the PP2A(D):PPP2R4 complex. Is involved in apoptosis; the function appears to be independent from PP2A. This is Serine/threonine-protein phosphatase 2A activator from Homo sapiens (Human).